A 394-amino-acid polypeptide reads, in one-letter code: uncharacterized protein (394 aa).

4 N-linked (GlcNAc...) asparagine glycosylation sites follow: Asn-3, Asn-14, Asn-20, and Asn-25. 6 consecutive transmembrane segments (helical) span residues 64–84 (AVGI…LVNI), 101–121 (FIWI…YIDV), 133–153 (IFSF…WHVI), 180–200 (IFVV…MGFF), 228–248 (VLLA…SFVY), and 256–276 (WVGM…QFLE). 2 N-linked (GlcNAc...) asparagine glycosylation sites follow: Asn-283 and Asn-286. A helical membrane pass occupies residues 291–311 (AGLVFGLGFCPPLILAYTVCI). Residue Asn-344 is glycosylated (N-linked (GlcNAc...) asparagine).

It is found in the membrane. This is an uncharacterized protein from Schizosaccharomyces pombe (strain 972 / ATCC 24843) (Fission yeast).